Reading from the N-terminus, the 144-residue chain is 3-hydroxyacyl-[acyl-carrier-protein] dehydratase FabZ (144 aa).

H48 is an active-site residue.

It belongs to the thioester dehydratase family. FabZ subfamily.

It localises to the cytoplasm. It carries out the reaction a (3R)-hydroxyacyl-[ACP] = a (2E)-enoyl-[ACP] + H2O. Its function is as follows. Involved in unsaturated fatty acids biosynthesis. Catalyzes the dehydration of short chain beta-hydroxyacyl-ACPs and long chain saturated and unsaturated beta-hydroxyacyl-ACPs. The chain is 3-hydroxyacyl-[acyl-carrier-protein] dehydratase FabZ from Bacillus anthracis (strain A0248).